The sequence spans 65 residues: Large ribosomal subunit protein bL35 (65 aa).

Basic residues predominate over residues 1–16 (MVPKQKTHSGAKKRFK). The interval 1–39 (MVPKQKTHSGAKKRFKLTGSGSVSRARAGMRHNFEHRSS) is disordered.

The protein belongs to the bacterial ribosomal protein bL35 family.

This chain is Large ribosomal subunit protein bL35, found in Tropheryma whipplei (strain TW08/27) (Whipple's bacillus).